The chain runs to 843 residues: Pullulanase (843 aa).

An N-terminal signal peptide occupies residues 1–19 (MKTKLWLLLVLLLSALIFS). Residue D535 is the Nucleophile of the active site. The Proton donor role is filled by E564.

This sequence belongs to the glycosyl hydrolase 13 family.

The enzyme catalyses Hydrolysis of (1-&gt;6)-alpha-D-glucosidic linkages in pullulan, amylopectin and glycogen, and in the alpha- and beta-limit dextrins of amylopectin and glycogen.. The protein is Pullulanase (pulA) of Thermotoga maritima (strain ATCC 43589 / DSM 3109 / JCM 10099 / NBRC 100826 / MSB8).